Here is a 206-residue protein sequence, read N- to C-terminus: ATP-dependent Clp protease proteolytic subunit 1 (206 aa).

Ser100 functions as the Nucleophile in the catalytic mechanism. His125 is a catalytic residue.

The protein belongs to the peptidase S14 family. Fourteen ClpP subunits assemble into 2 heptameric rings which stack back to back to give a disk-like structure with a central cavity, resembling the structure of eukaryotic proteasomes.

It is found in the cytoplasm. It carries out the reaction Hydrolysis of proteins to small peptides in the presence of ATP and magnesium. alpha-casein is the usual test substrate. In the absence of ATP, only oligopeptides shorter than five residues are hydrolyzed (such as succinyl-Leu-Tyr-|-NHMec, and Leu-Tyr-Leu-|-Tyr-Trp, in which cleavage of the -Tyr-|-Leu- and -Tyr-|-Trp bonds also occurs).. In terms of biological role, cleaves peptides in various proteins in a process that requires ATP hydrolysis. Has a chymotrypsin-like activity. Plays a major role in the degradation of misfolded proteins. This Myxococcus xanthus (strain DK1622) protein is ATP-dependent Clp protease proteolytic subunit 1.